Consider the following 514-residue polypeptide: Probable endopolygalacturonase D (514 aa).

Positions 1–16 are cleaved as a signal peptide; it reads MKRCALLTPLLPLALA. Positions 134–166 are disordered; sequence IKSSSPGPSSSFAAAATTEAPTSTRASPYTPYT. A compositionally biased stretch (low complexity) spans 136 to 166; it reads SSSPGPSSSFAAAATTEAPTSTRASPYTPYT. The cysteines at positions 173 and 188 are disulfide-linked. Residue N240 is glycosylated (N-linked (GlcNAc...) asparagine). PbH1 repeat units lie at residues 280-302, 303-341, 342-363, 364-384, 393-414, 422-444, and 456-500; these read VYNS…DIEN, TESL…DIKS, STDL…AITS, GTNI…SIGS, VDGV…RIKT, VSNI…VVQQ, and SNGV…SITG. Residues 312–335 form a disordered region; that stretch reads TLDNSAGDEPNDSSDGDPAAHNSD. N322 carries N-linked (GlcNAc...) asparagine glycosylation. The active-site Proton donor is D356. An intrachain disulfide couples C358 to C374. An N-linked (GlcNAc...) asparagine glycan is attached at N366. H378 is an active-site residue. N-linked (GlcNAc...) asparagine glycosylation occurs at N429. C483 and C488 are oxidised to a cystine. N490 carries N-linked (GlcNAc...) asparagine glycosylation. Cysteines 506 and 513 form a disulfide.

It belongs to the glycosyl hydrolase 28 family.

It is found in the secreted. It catalyses the reaction (1,4-alpha-D-galacturonosyl)n+m + H2O = (1,4-alpha-D-galacturonosyl)n + (1,4-alpha-D-galacturonosyl)m.. In terms of biological role, involved in maceration and soft-rotting of plant tissue. Hydrolyzes the 1,4-alpha glycosidic bonds of de-esterified pectate in the smooth region of the plant cell wall. The protein is Probable endopolygalacturonase D (pgaD) of Emericella nidulans (strain FGSC A4 / ATCC 38163 / CBS 112.46 / NRRL 194 / M139) (Aspergillus nidulans).